The sequence spans 658 residues: Glycogen debranching enzyme (658 aa).

Residue D336 is the Nucleophile of the active site. E371 serves as the catalytic Proton donor. Positions 459–483 (EANGEENRDGTNSNYSDNHGKEGLG) are disordered.

The protein belongs to the glycosyl hydrolase 13 family.

It catalyses the reaction Hydrolysis of (1-&gt;6)-alpha-D-glucosidic linkages to branches with degrees of polymerization of three or four glucose residues in limit dextrin.. The protein operates within glycan degradation; glycogen degradation. Removes maltotriose and maltotetraose chains that are attached by 1,6-alpha-linkage to the limit dextrin main chain, generating a debranched limit dextrin. In Salmonella agona (strain SL483), this protein is Glycogen debranching enzyme.